The chain runs to 198 residues: Glycerol-3-phosphate acyltransferase (198 aa).

Transmembrane regions (helical) follow at residues 1–21 (MNLL…GYLA), 53–73 (IIVF…AKYL), 79–99 (WQVA…WLNW), 111–131 (IFLG…IIMI), 136–156 (IVSL…FLSF), and 158–178 (GSNI…LVIW).

Belongs to the PlsY family. Probably interacts with PlsX.

It localises to the cell inner membrane. It carries out the reaction an acyl phosphate + sn-glycerol 3-phosphate = a 1-acyl-sn-glycero-3-phosphate + phosphate. Its pathway is lipid metabolism; phospholipid metabolism. Functionally, catalyzes the transfer of an acyl group from acyl-phosphate (acyl-PO(4)) to glycerol-3-phosphate (G3P) to form lysophosphatidic acid (LPA). This enzyme utilizes acyl-phosphate as fatty acyl donor, but not acyl-CoA or acyl-ACP. The chain is Glycerol-3-phosphate acyltransferase from Prochlorococcus marinus (strain NATL1A).